Here is a 195-residue protein sequence, read N- to C-terminus: 2-cysteine peroxiredoxin, chloroplastic (195 aa).

In terms of domain architecture, Thioredoxin spans 3–161; that stretch reads IRVGQKAPDF…ALRTLQAIQY (159 aa). Cys-49 serves as the catalytic Cysteine sulfenic acid (-SOH) intermediate.

This sequence belongs to the peroxiredoxin family. AhpC/Prx1 subfamily. As to quaternary structure, homodimer; disulfide-linked, upon oxidation.

It localises to the plastid. It is found in the chloroplast. It carries out the reaction a hydroperoxide + [thioredoxin]-dithiol = an alcohol + [thioredoxin]-disulfide + H2O. Functionally, thiol-specific peroxidase that catalyzes the reduction of hydrogen peroxide and organic hydroperoxides to water and alcohols, respectively. Plays a role in cell protection against oxidative stress by detoxifying peroxides. This chain is 2-cysteine peroxiredoxin, chloroplastic, found in Chattonella marina var. antiqua (Red tide flagellate).